A 210-amino-acid chain; its full sequence is Na(+)-translocating NADH-quinone reductase subunit D (210 aa).

5 consecutive transmembrane segments (helical) span residues 42–62 (FVMT…VSLI), 72–92 (IIVQ…VLKA), 103–123 (VFVG…AFAM), 131–151 (LIDG…VGFF), and 178–198 (NGLM…IWVI).

Belongs to the NqrDE/RnfAE family. As to quaternary structure, composed of six subunits; NqrA, NqrB, NqrC, NqrD, NqrE and NqrF.

It localises to the cell inner membrane. The enzyme catalyses a ubiquinone + n Na(+)(in) + NADH + H(+) = a ubiquinol + n Na(+)(out) + NAD(+). Functionally, NQR complex catalyzes the reduction of ubiquinone-1 to ubiquinol by two successive reactions, coupled with the transport of Na(+) ions from the cytoplasm to the periplasm. NqrA to NqrE are probably involved in the second step, the conversion of ubisemiquinone to ubiquinol. In Vibrio parahaemolyticus serotype O3:K6 (strain RIMD 2210633), this protein is Na(+)-translocating NADH-quinone reductase subunit D.